Here is a 315-residue protein sequence, read N- to C-terminus: Olfactory receptor 3A2 (315 aa).

The Extracellular segment spans residues Met-1–Val-29. A glycan (N-linked (GlcNAc...) asparagine) is linked at Asn-8. A helical transmembrane segment spans residues Val-30–Ile-52. The Cytoplasmic segment spans residues Leu-53–Ala-60. A helical transmembrane segment spans residues Pro-61–Pro-82. At Ala-83–Gln-103 the chain is on the extracellular side. A disulfide bridge connects residues Cys-100 and Cys-192. A helical membrane pass occupies residues Leu-104–Tyr-123. Over Asp-124 to Val-143 the chain is Cytoplasmic. The helical transmembrane segment at Gln-144–Thr-161 threads the bilayer. The Extracellular portion of the chain corresponds to His-162–Glu-199. A helical transmembrane segment spans residues Leu-200–His-223. At Val-224 to Ala-240 the chain is on the cytoplasmic side. Residues Phe-241–Arg-264 traverse the membrane as a helical segment. At Leu-265–Lys-275 the chain is on the extracellular side. Residues Gly-276 to Leu-295 form a helical membrane-spanning segment. The Cytoplasmic portion of the chain corresponds to Arg-296–Thr-315.

The protein belongs to the G-protein coupled receptor 1 family.

It localises to the cell membrane. Its function is as follows. Odorant receptor. The polypeptide is Olfactory receptor 3A2 (OR3A2) (Pan troglodytes (Chimpanzee)).